Reading from the N-terminus, the 285-residue chain is Nucleotide-binding protein Geob_2284 (285 aa).

ATP is bound at residue 8 to 15; it reads GLSGSGKS. 59–62 lines the GTP pocket; that stretch reads DIRG.

It belongs to the RapZ-like family.

Its function is as follows. Displays ATPase and GTPase activities. In Geotalea daltonii (strain DSM 22248 / JCM 15807 / FRC-32) (Geobacter daltonii), this protein is Nucleotide-binding protein Geob_2284.